Reading from the N-terminus, the 471-residue chain is Tryptophanase (471 aa).

Residues Lys-5, Lys-115, and Lys-156 each carry the N6-acetyllysine modification. Lys-270 bears the N6-(pyridoxal phosphate)lysine mark. N6-acetyllysine is present on Lys-450.

Belongs to the beta-eliminating lyase family. In terms of assembly, homotetramer. Pyridoxal 5'-phosphate serves as cofactor.

It carries out the reaction L-tryptophan + H2O = indole + pyruvate + NH4(+). The protein operates within amino-acid degradation; L-tryptophan degradation via pyruvate pathway; indole and pyruvate from L-tryptophan: step 1/1. This Escherichia coli O9:H4 (strain HS) protein is Tryptophanase.